The chain runs to 418 residues: Mitochondrial outer membrane protein SLC25A46 (418 aa).

Phosphoserine is present on residues Ser32 and Ser35. Thr45 is subject to Phosphothreonine. The disordered stretch occupies residues 46–96 (PPDIPGSRNLHWGEKSPSYGVPSAPPTLEGSAEEPFPGGGEGPRPGPSSEQ). The Solcar 1 repeat unit spans residues 96–187 (QLNRFAGFGI…GIISEFTPLP (92 aa)). 6 helical membrane passes run 103–123 (FGIGLASLFTENVLAHPCIVL), 167–187 (FIVQGVTLGAEGIISEFTPLP), 202–222 (HLLLKCLTYMVAMPFYSASLI), 258–278 (LLPLFSLIFPTVLHGVLHYII), 314–334 (FPELIANFAASLCSDVILYPL), and 382–402 (VFGFYKGFGAVIIQYTLHATI). The Solcar 2 repeat unit spans residues 311-413 (DAYFPELIAN…QITKMIYSTL (103 aa)).

The protein belongs to the mitochondrial carrier (TC 2.A.29) family. Associates with the mitochondrial contact site and cristae organizing system (MICOS) complex. May associate with the endoplasmic reticulum membrane protein complex (EMC).

It is found in the mitochondrion outer membrane. Functionally, transmembrane protein of the mitochondrial outer membrane that controls mitochondrial organization. May regulate the assembly of the MICOS (mitochondrial contact site and cristae organizing system) complex which is essential to the biogenesis and dynamics of mitochondrial cristae, the inwards folds of the inner mitochondrial membrane. Through its interaction with the EMC (endoplasmic reticulum membrane protein complex), could regulate mitochondrial lipid homeostasis and thereby mitochondrial fission. The sequence is that of Mitochondrial outer membrane protein SLC25A46 from Mus musculus (Mouse).